Reading from the N-terminus, the 192-residue chain is UPF0301 protein Bcep18194_A3962 (192 aa).

Belongs to the UPF0301 (AlgH) family.

The polypeptide is UPF0301 protein Bcep18194_A3962 (Burkholderia lata (strain ATCC 17760 / DSM 23089 / LMG 22485 / NCIMB 9086 / R18194 / 383)).